Consider the following 131-residue polypeptide: Ribosome-binding factor A (131 aa).

The protein belongs to the RbfA family. Monomer. Binds 30S ribosomal subunits, but not 50S ribosomal subunits or 70S ribosomes.

It is found in the cytoplasm. Its function is as follows. One of several proteins that assist in the late maturation steps of the functional core of the 30S ribosomal subunit. Associates with free 30S ribosomal subunits (but not with 30S subunits that are part of 70S ribosomes or polysomes). Required for efficient processing of 16S rRNA. May interact with the 5'-terminal helix region of 16S rRNA. The chain is Ribosome-binding factor A from Protochlamydia amoebophila (strain UWE25).